The primary structure comprises 477 residues: Cytochrome P450 monooxygenase poxC (477 aa).

The chain crosses the membrane as a helical span at residues 24-41 (AWHFAVLSFVYVIARSIY). Position 420 (Cys-420) interacts with heme.

It belongs to the cytochrome P450 family. It depends on heme as a cofactor.

It is found in the membrane. The protein operates within secondary metabolite biosynthesis. In terms of biological role, cytochrome P450 monooxygenase; part of the gene cluster that mediates the biosynthesis of oxaleimides, cytotoxic compounds containing an unusual disubstituted succinimide moiety. The first step of the pathway is provided by the HR-PKS poxF that serves in a new mode of collaborative biosynthesis with the PKS-NRPS poxE, by providing the olefin containing amino acid substrate via the synthesis of an ACP-bound dec-4-enoate. The cytochrome P450 monooxygenase poxM-catalyzed oxidation at the alpha-position creates the enzyme-bound 2-hydroxydec-4-enoyl-ACP thioester, which may be prone to spontaneous hydrolysis to yield 2-hydroxydec-4-enoic acid due to increased electrophilicity of the carbonyl. 2-hydroxydec-4-enoic acid can then be further oxidized by poxM to yield the alpha-ketoacid 2-oxodec-4-enoicacid, which is reductively aminated by the aminotransferase poxL to yield (S,E)-2-aminodec-4-enoic acid. The Hybrid PKS-NRPS synthetase poxE then performs condensation between the octaketide product of its PKS modules and the amino group of (S,E)-2-aminodec-4-enoic acid which is activated and incorporated by the adenylation domain. The resulting aminoacyl product can be cyclized by the Diels-Alderase PoxQ and reductively released by the reductive (R) domain of poxE to yield an aldehyde intermediate. The released aldehyde is then substrate for a Knoevenagel condensation by the hydrolyase poxO followed by an oxidation at the 5-position of the pyrrolidone ring. The presence of the olefin from the amino acid building block allows for migration of the substituted allyl group to occur. This allylic transposition reaction takes place in a conjugate addition, semipinacol-like fashion to yield a succinimide intermediate. Iterative two-electron oxidations of the C7 methyl of the succinimide intermediate to the carboxylic acid can be catalyzed by one of two remaining cytochrome P450 monooxygenasess poxC or poxD to yield oxaleimide A. Subsequent oxidation yields the maleimide scaffold oxaleimide I. Both oxaleimide A and oxaleimide I can undergo oxidative modifications in the decalin ring to yield the series of products oxaleimides B to H. In Penicillium oxalicum (strain 114-2 / CGMCC 5302) (Penicillium decumbens), this protein is Cytochrome P450 monooxygenase poxC.